The chain runs to 61 residues: Large ribosomal subunit protein uL30 (61 aa).

Belongs to the universal ribosomal protein uL30 family. Part of the 50S ribosomal subunit.

This chain is Large ribosomal subunit protein uL30, found in Francisella tularensis subsp. tularensis (strain FSC 198).